Here is a 289-residue protein sequence, read N- to C-terminus: Phosphatidylglycerol--prolipoprotein diacylglyceryl transferase (289 aa).

Transmembrane regions (helical) follow at residues 13–33 (LGPL…LLGW), 61–81 (FILW…VLFY), and 99–119 (GGMS…LFAM). R144 contacts a 1,2-diacyl-sn-glycero-3-phospho-(1'-sn-glycerol). 2 consecutive transmembrane segments (helical) span residues 218 to 238 (GVVM…LENV) and 250 to 270 (LGLT…LWLI).

This sequence belongs to the Lgt family.

It is found in the cell inner membrane. The catalysed reaction is L-cysteinyl-[prolipoprotein] + a 1,2-diacyl-sn-glycero-3-phospho-(1'-sn-glycerol) = an S-1,2-diacyl-sn-glyceryl-L-cysteinyl-[prolipoprotein] + sn-glycerol 1-phosphate + H(+). It functions in the pathway protein modification; lipoprotein biosynthesis (diacylglyceryl transfer). Catalyzes the transfer of the diacylglyceryl group from phosphatidylglycerol to the sulfhydryl group of the N-terminal cysteine of a prolipoprotein, the first step in the formation of mature lipoproteins. The protein is Phosphatidylglycerol--prolipoprotein diacylglyceryl transferase of Phenylobacterium zucineum (strain HLK1).